A 1158-amino-acid polypeptide reads, in one-letter code: ATP-dependent helicase/deoxyribonuclease subunit B (1158 aa).

The 275-residue stretch at 1–275 (MTLHAYLGRA…QYFNQLYRFN (275 aa)) folds into the UvrD-like helicase ATP-binding domain. An ATP-binding site is contributed by 8-15 (GRAGTGKS). Residues 269-583 (NQLYRFNNQD…SIGTMDLAKV (315 aa)) form the UvrD-like helicase C-terminal domain. The [4Fe-4S] cluster site is built by Cys-784, Cys-1112, Cys-1115, and Cys-1121.

Belongs to the helicase family. AddB/RexB type 1 subfamily. As to quaternary structure, heterodimer of AddA and AddB. The cofactor is Mg(2+). It depends on [4Fe-4S] cluster as a cofactor.

In terms of biological role, the heterodimer acts as both an ATP-dependent DNA helicase and an ATP-dependent, dual-direction single-stranded exonuclease. Recognizes the chi site generating a DNA molecule suitable for the initiation of homologous recombination. The AddB subunit has 5' -&gt; 3' nuclease activity but not helicase activity. The chain is ATP-dependent helicase/deoxyribonuclease subunit B from Staphylococcus aureus (strain COL).